A 1050-amino-acid polypeptide reads, in one-letter code: Probable efflux pump membrane transporter TtgB (1050 aa).

12 helical membrane passes run 10–30 (IFAW…ILKL), 339–359 (GVIH…YLFL), 370–390 (MTVP…GFSI), 393–413 (LTMF…IVVV), 440–460 (GALV…AFFG), 472–492 (ITIV…TPAL), 539–559 (VPFL…FARI), 871–891 (MPAL…ALYE), 893–913 (WSIP…ALIA), 923–943 (VYFL…AILI), 972–992 (IIMT…ASGA), and 1004–1024 (VIGG…LFFV).

The protein belongs to the resistance-nodulation-cell division (RND) (TC 2.A.6) family.

It is found in the cell inner membrane. In terms of biological role, probable membrane transporter component of the TtgABC efflux pump with unknown specificity. This chain is Probable efflux pump membrane transporter TtgB (ttgB), found in Pseudomonas putida (strain ATCC 47054 / DSM 6125 / CFBP 8728 / NCIMB 11950 / KT2440).